We begin with the raw amino-acid sequence, 526 residues long: Phosphoenolpyruvate carboxylase (526 aa).

It belongs to the PEPCase type 2 family. In terms of assembly, homotetramer. Requires Mg(2+) as cofactor.

The enzyme catalyses oxaloacetate + phosphate = phosphoenolpyruvate + hydrogencarbonate. Functionally, catalyzes the irreversible beta-carboxylation of phosphoenolpyruvate (PEP) to form oxaloacetate (OAA), a four-carbon dicarboxylic acid source for the tricarboxylic acid cycle. This chain is Phosphoenolpyruvate carboxylase, found in Methanosarcina acetivorans (strain ATCC 35395 / DSM 2834 / JCM 12185 / C2A).